An 87-amino-acid chain; its full sequence is Large ribosomal subunit protein bL27 (87 aa).

Positions 1–21 (MAHKKAGGSSRNGRDSESKRL) are disordered.

Belongs to the bacterial ribosomal protein bL27 family.

This Paraburkholderia xenovorans (strain LB400) protein is Large ribosomal subunit protein bL27.